Here is a 346-residue protein sequence, read N- to C-terminus: DnaJ protein ERDJ3B (346 aa).

Positions 1-23 (MAIRWSELCIVLFALSYAICVLA) are cleaved as a signal peptide. One can recognise a J domain in the interval 26–91 (SYYDVLQVPK…EKREIYNKYG (66 aa)). The N-linked (GlcNAc...) asparagine glycan is linked to N267.

Interacts with SDF2 and MED37A/BIP1. Post-translationally, N-glycosylated. Expressed in leaves, flower buds and flowers.

Its subcellular location is the endoplasmic reticulum lumen. Regulates protein folding in the endoplasmic reticulum (ER) lumen. Forms a complex in the ER with SDF2 and MED37A/BIP1 which is required for the proper accumulation and function of the surface-exposed leucine-rich repeat receptor kinases EFR involved in pathogen-associated molecular pattern (PAMP) triggered immunity. The polypeptide is DnaJ protein ERDJ3B (ERDJ3B) (Arabidopsis thaliana (Mouse-ear cress)).